A 238-amino-acid polypeptide reads, in one-letter code: tRNA1(Val) (adenine(37)-N6)-methyltransferase (238 aa).

This sequence belongs to the methyltransferase superfamily. tRNA (adenine-N(6)-)-methyltransferase family.

It localises to the cytoplasm. It carries out the reaction adenosine(37) in tRNA1(Val) + S-adenosyl-L-methionine = N(6)-methyladenosine(37) in tRNA1(Val) + S-adenosyl-L-homocysteine + H(+). Functionally, specifically methylates the adenine in position 37 of tRNA(1)(Val) (anticodon cmo5UAC). This chain is tRNA1(Val) (adenine(37)-N6)-methyltransferase, found in Shewanella baltica (strain OS223).